The chain runs to 479 residues: Aspartyl/glutamyl-tRNA(Asn/Gln) amidotransferase subunit B (479 aa).

Belongs to the GatB/GatE family. GatB subfamily. As to quaternary structure, heterotrimer of A, B and C subunits.

It carries out the reaction L-glutamyl-tRNA(Gln) + L-glutamine + ATP + H2O = L-glutaminyl-tRNA(Gln) + L-glutamate + ADP + phosphate + H(+). The catalysed reaction is L-aspartyl-tRNA(Asn) + L-glutamine + ATP + H2O = L-asparaginyl-tRNA(Asn) + L-glutamate + ADP + phosphate + 2 H(+). In terms of biological role, allows the formation of correctly charged Asn-tRNA(Asn) or Gln-tRNA(Gln) through the transamidation of misacylated Asp-tRNA(Asn) or Glu-tRNA(Gln) in organisms which lack either or both of asparaginyl-tRNA or glutaminyl-tRNA synthetases. The reaction takes place in the presence of glutamine and ATP through an activated phospho-Asp-tRNA(Asn) or phospho-Glu-tRNA(Gln). In Streptococcus pyogenes serotype M3 (strain ATCC BAA-595 / MGAS315), this protein is Aspartyl/glutamyl-tRNA(Asn/Gln) amidotransferase subunit B.